A 321-amino-acid chain; its full sequence is 1D-myo-inositol 2-acetamido-2-deoxy-alpha-D-glucopyranoside deacetylase (321 aa).

3 residues coordinate Zn(2+): H15, D18, and H150. Residues 280-321 (PEGERESDLFAGLPPATDGTGAAGAPSATGAANPADAEGGAA) form a disordered region. Low complexity predominate over residues 290–321 (AGLPPATDGTGAAGAPSATGAANPADAEGGAA).

The protein belongs to the MshB deacetylase family. Requires Zn(2+) as cofactor.

The catalysed reaction is 1D-myo-inositol 2-acetamido-2-deoxy-alpha-D-glucopyranoside + H2O = 1D-myo-inositol 2-amino-2-deoxy-alpha-D-glucopyranoside + acetate. Catalyzes the deacetylation of 1D-myo-inositol 2-acetamido-2-deoxy-alpha-D-glucopyranoside (GlcNAc-Ins) in the mycothiol biosynthesis pathway. The protein is 1D-myo-inositol 2-acetamido-2-deoxy-alpha-D-glucopyranoside deacetylase of Streptomyces griseus subsp. griseus (strain JCM 4626 / CBS 651.72 / NBRC 13350 / KCC S-0626 / ISP 5235).